A 352-amino-acid polypeptide reads, in one-letter code: ATPase GET3 (352 aa).

26–33 (KGGVGKTT) provides a ligand contact to ATP. D57 is an active-site residue. 2 residues coordinate ATP: E243 and N270. C283 and C286 together coordinate Zn(2+).

It belongs to the arsA ATPase family. As to quaternary structure, homodimer. Component of the Golgi to ER traffic (GET) complex, which is composed of GET1, GET2 and GET3. Within the complex, GET1 and GET2 form a heterotetramer which is stabilized by phosphatidylinositol binding and which binds to the GET3 homodimer. Interacts with the chloride channel protein GEF1.

It is found in the cytoplasm. The protein resides in the endoplasmic reticulum. Its subcellular location is the golgi apparatus. Its function is as follows. ATPase required for the post-translational delivery of tail-anchored (TA) proteins to the endoplasmic reticulum. Recognizes and selectively binds the transmembrane domain of TA proteins in the cytosol. This complex then targets to the endoplasmic reticulum by membrane-bound receptors GET1 and GET2, where the tail-anchored protein is released for insertion. This process is regulated by ATP binding and hydrolysis. ATP binding drives the homodimer towards the closed dimer state, facilitating recognition of newly synthesized TA membrane proteins. ATP hydrolysis is required for insertion. Subsequently, the homodimer reverts towards the open dimer state, lowering its affinity for the GET1-GET2 receptor, and returning it to the cytosol to initiate a new round of targeting. Cooperates with the HDEL receptor ERD2 to mediate the ATP-dependent retrieval of resident ER proteins that contain a C-terminal H-D-E-L retention signal from the Golgi to the ER. Involved in low-level resistance to the oxyanions arsenite and arsenate, and in heat tolerance. The sequence is that of ATPase GET3 from Vanderwaltozyma polyspora (strain ATCC 22028 / DSM 70294 / BCRC 21397 / CBS 2163 / NBRC 10782 / NRRL Y-8283 / UCD 57-17) (Kluyveromyces polysporus).